A 483-amino-acid polypeptide reads, in one-letter code: Glutamyl-tRNA(Gln) amidotransferase subunit A (483 aa).

Residues K75 and S150 each act as charge relay system in the active site. Catalysis depends on S174, which acts as the Acyl-ester intermediate.

The protein belongs to the amidase family. GatA subfamily. As to quaternary structure, heterotrimer of A, B and C subunits.

It catalyses the reaction L-glutamyl-tRNA(Gln) + L-glutamine + ATP + H2O = L-glutaminyl-tRNA(Gln) + L-glutamate + ADP + phosphate + H(+). Its function is as follows. Allows the formation of correctly charged Gln-tRNA(Gln) through the transamidation of misacylated Glu-tRNA(Gln) in organisms which lack glutaminyl-tRNA synthetase. The reaction takes place in the presence of glutamine and ATP through an activated gamma-phospho-Glu-tRNA(Gln). This is Glutamyl-tRNA(Gln) amidotransferase subunit A from Microcystis aeruginosa (strain NIES-843 / IAM M-2473).